The primary structure comprises 464 residues: MGSVNSSPNEEFETVPDSQISGFDSPLIPTSVGSYFRDDDDDEKVHPNFISDPENDSLNSDEEFSSLENSDLNLSGAKAESGDDFDPILKRTIISKRKAPSNNEDEEIVKTPRKLVNYVPLKIFNLGDSFDDTITTTVAKLQDLKKEILDSPRSNKSIVITSNTVAKSELQKSIKFSGSIPEIYLDVVTKETISDKYKDWHFISKNCHYEQLMDLEMKDTAYSFLFGSSRSQGKVPEFVHLKCPSITNLLVLFGVNQEKCNSLKINYEKKENSRYDNLCTIFPVNKMLKFLMYFYSDDDNDDVREFFLKAFICLILDRKVFNAMESDHRLCFKVLELFNEAHFINSYFEIVDKNDFFLHYRLLQIFPHLQSALLRRRFSEKQGRTETIQQNIIKEFNEFFDCKNYKNLLYFILTMYGSKFIPFGPKCQVTEYFKDCILDISNETTNDVEISILKGILNLFSKIR.

Residues methionine 1–asparagine 69 form a disordered region. A compositionally biased stretch (acidic residues) spans proline 53–serine 65. A phosphoserine mark is found at serine 81 and serine 101.

As to quaternary structure, component of the Smc5-Smc6 complex which consists of KRE29, MMS21, NSE1, NSE3, NSE4, NSE5, SMC5 and SMC6. Interacts with NSE5.

The protein resides in the nucleus. It is found in the cytoplasm. Acts in a DNA repair pathway for removal of UV-induced DNA damage that is distinct from classical nucleotide excision repair and in repair of ionizing radiation damage. Functions in homologous recombination repair of DNA double strand breaks and in recovery of stalled replication forks. The protein is DNA repair protein KRE29 (KRE29) of Saccharomyces cerevisiae (strain ATCC 204508 / S288c) (Baker's yeast).